A 59-amino-acid polypeptide reads, in one-letter code: Protein ORF5a (59 aa).

The helical; Signal-anchor for type III membrane protein transmembrane segment at V13–I33 threads the bilayer.

The protein localises to the membrane. In Equine arteritis virus (strain Bucyrus) (EAV), this protein is Protein ORF5a (GP5).